A 191-amino-acid polypeptide reads, in one-letter code: Polysulfide reductase chain B (191 aa).

4Fe-4S ferredoxin-type domains lie at 5 to 34 (YGMIHDENLCIGCQACNIACRSENKIPDSV), 50 to 83 (GTLSFNYHRQSCVQCENTPCVSVCPTKASYVNED), and 84 to 113 (GIVSVNVDLCVGCLYCIAACPYQARYVDPV). 16 residues coordinate [4Fe-4S] cluster: Cys-14, Cys-17, Cys-20, Cys-24, Cys-61, Cys-64, Cys-69, Cys-73, Cys-93, Cys-96, Cys-99, Cys-103, Cys-120, Cys-123, Cys-136, and Cys-140.

Functional polysulfide reductase is made up of three different (A, B, and C) subunits.

Functionally, component of the phosphorylative electron transport system with polysulfide as the terminal acceptor. This is Polysulfide reductase chain B (psrB) from Wolinella succinogenes (strain ATCC 29543 / DSM 1740 / CCUG 13145 / JCM 31913 / LMG 7466 / NCTC 11488 / FDC 602W) (Vibrio succinogenes).